The following is a 227-amino-acid chain: Ribosomal RNA large subunit methyltransferase E (227 aa).

S-adenosyl-L-methionine-binding residues include G78, W80, D103, D119, and D143. K183 acts as the Proton acceptor in catalysis.

Belongs to the class I-like SAM-binding methyltransferase superfamily. RNA methyltransferase RlmE family.

The protein resides in the cytoplasm. It carries out the reaction uridine(2552) in 23S rRNA + S-adenosyl-L-methionine = 2'-O-methyluridine(2552) in 23S rRNA + S-adenosyl-L-homocysteine + H(+). Functionally, specifically methylates the uridine in position 2552 of 23S rRNA at the 2'-O position of the ribose in the fully assembled 50S ribosomal subunit. The sequence is that of Ribosomal RNA large subunit methyltransferase E from Rickettsia conorii (strain ATCC VR-613 / Malish 7).